We begin with the raw amino-acid sequence, 956 residues long: Zinc finger CCHC domain-containing protein 14 (956 aa).

Disordered stretches follow at residues 25-50 (SSLN…PSGA), 78-99 (ALHT…GKHG), 206-229 (SSSS…KVGA), 243-276 (GIPS…GTGS), 361-464 (KEKS…EKEK), 485-505 (PVQN…PQLM), 543-583 (LEER…QGLS), and 750-786 (FYSG…PQPA). Residues 29–43 (SGGGGGGGGGGGGKS) are compositionally biased toward gly residues. 2 stretches are compositionally biased toward low complexity: residues 206–225 (SSSS…PSLP) and 246–265 (SSQS…SASL). Over residues 369–389 (LNSSAPSLVTSSGVARVTPTS) the composition is skewed to polar residues. The span at 423 to 432 (SSEYSSSSSS) shows a compositional bias: low complexity. Residues 438-464 (VREESSDSAEESDRRVDIHVEGTEKEK) are compositionally biased toward basic and acidic residues. Positions 750-768 (FYSGGAGSSSPGNIPASSQ) are enriched in low complexity. The CCHC-type zinc finger occupies 913–930 (LSCYNCGATGHRAQDCKQ).

The polypeptide is Zinc finger CCHC domain-containing protein 14 (Zcchc14) (Mus musculus (Mouse)).